The sequence spans 260 residues: LLATLPLAVHASPQPLEQIKLSESQLSGRVGMIEMDLASGRTLTAWRADERFPMMSTFKVVLCGAVLARVDAGDEQLERKIHYRQQDLVDYSPVSEKHLADGMTVGELCAAAITMSDNSAANLLLATVGGPAGLTAFLRQIGDNVTRLDRWETELNEALPGDARATTTPASMAATLRKLLTSQRLSARSQRQLLQWMVDDRVAGPLIRSVLPAGWFIADKTGAGERGARGIVALLGPNNKAERIVVIYLRDTPASMAERN.

The N-terminal stretch at 1–11 (LLATLPLAVHA) is a signal peptide. Catalysis depends on serine 56, which acts as the Acyl-ester intermediate. Cysteine 63 and cysteine 109 are disulfide-bonded. Residue glutamate 154 is the Proton acceptor of the active site. Residue 220–222 (KTG) coordinates substrate.

Belongs to the class-A beta-lactamase family.

It catalyses the reaction a beta-lactam + H2O = a substituted beta-amino acid. Functionally, SHV enzymes hydrolyze broad spectrum cephalosporins notably cefotaxime and ceftazidime. The polypeptide is Beta-lactamase SHV-6 (bla) (Klebsiella pneumoniae).